The following is a 475-amino-acid chain: Ras-GEF domain-containing family member 1A (475 aa).

Residues 33–164 enclose the N-terminal Ras-GEF domain; that stretch reads QDGSLVSGSL…SISQMTQNVL (132 aa). A Ras-GEF domain is found at 208 to 455; that stretch reads DPLILAQQLT…FLASFENEGP (248 aa).

Functionally, guanine nucleotide exchange factor (GEF) with specificity for rap2a and other Ras family proteins (in vitro). Plays a role in cell migration. In Xenopus tropicalis (Western clawed frog), this protein is Ras-GEF domain-containing family member 1A (rasgef1a).